A 75-amino-acid chain; its full sequence is MLVLTRKKNESIIINDNIEITVVDIQGEQVRIGINAPKSISIYRKEIYLEIQAENKKAAEIKNVDLKEDLKDFLK.

The protein belongs to the CsrA/RsmA family. Homodimer; the beta-strands of each monomer intercalate to form a hydrophobic core, while the alpha-helices form wings that extend away from the core.

It is found in the cytoplasm. In terms of biological role, a translational regulator that binds mRNA to regulate translation initiation and/or mRNA stability. Usually binds in the 5'-UTR at or near the Shine-Dalgarno sequence preventing ribosome-binding, thus repressing translation. Its main target seems to be the major flagellin gene, while its function is anatagonized by FliW. The polypeptide is Translational regulator CsrA (Acetivibrio thermocellus (strain ATCC 27405 / DSM 1237 / JCM 9322 / NBRC 103400 / NCIMB 10682 / NRRL B-4536 / VPI 7372) (Clostridium thermocellum)).